A 938-amino-acid chain; its full sequence is Chaperone protein ClpD1, chloroplastic (938 aa).

The N-terminal 83 residues, 1–83 (MEVCCCSTSS…FERFTERAVK (83 aa)), are a transit peptide targeting the chloroplast. Repeat stretches follow at residues 84 to 145 (AVVL…TPGA) and 159 to 224 (FSGS…LQAE). Residues 84 to 224 (AVVLSQREAK…SVALTRLQAE (141 aa)) enclose the Clp R domain. Residues 234–255 (GASSFKVPKKSPAGAGRSAFSK) form a disordered region. The i stretch occupies residues 266–519 (LDQFCLDLTT…RMESFNRKKE (254 aa)). ATP is bound by residues 311-318 (GEAGVGKT) and 660-667 (GPTGVGKT). Residues 586–777 (VGTEEIARVA…LIVMTSNIGS (192 aa)) form an II region.

Belongs to the ClpA/ClpB family. ClpD subfamily. As to expression, expressed in stems, culms and leaves.

The protein localises to the plastid. It localises to the chloroplast. In terms of biological role, molecular chaperone that may function in heat stress response. May interact with a ClpP-like protease involved in degradation of denatured proteins in the chloroplast. Chaperone involved in response to abiotic stresses. Plays a positive role during dehydration and salt stress. The sequence is that of Chaperone protein ClpD1, chloroplastic from Oryza sativa subsp. japonica (Rice).